The chain runs to 465 residues: Adenosylhomocysteinase (465 aa).

Residues Thr56, Asp131, and Glu191 each contribute to the substrate site. 192 to 194 serves as a coordination point for NAD(+); it reads TTT. Substrate contacts are provided by Lys221 and Asp225. NAD(+)-binding positions include Asn226, 255-260, Glu278, Asn313, 334-336, and Asn379; these read GYGDVG and IGH.

Belongs to the adenosylhomocysteinase family. The cofactor is NAD(+).

It localises to the cytoplasm. The enzyme catalyses S-adenosyl-L-homocysteine + H2O = L-homocysteine + adenosine. It participates in amino-acid biosynthesis; L-homocysteine biosynthesis; L-homocysteine from S-adenosyl-L-homocysteine: step 1/1. Functionally, may play a key role in the regulation of the intracellular concentration of adenosylhomocysteine. The polypeptide is Adenosylhomocysteinase (Bartonella henselae (strain ATCC 49882 / DSM 28221 / CCUG 30454 / Houston 1) (Rochalimaea henselae)).